A 498-amino-acid chain; its full sequence is MTVFLSFAFLAAILTHIGCSNQRRSPENGGRRYNRIQHGQCAYTFILPEHDGNCRESTTDQYNTNALQRDAPHVEQDFSSQKLQHLEHVMENYTQWLQKIENYIVENMKSEMAQIQQNAVQNHTATMLEIGTSLLSQTAEQTRKLTDVETQVLNQTSRLEIQLLENSLSTYKLEKQLLQQTNEILKIHEKNSLLEHKILEMEGKHKEELDTLKEEKENLQGLVTRQTYIIQELKKQLNRATTNNSVLQKQQLELMDTVHNLVNLCTKEGVLLKGGKKEEVKPFRDCADVYQAGFNKSGIYTIYINNMPEPKKVFCNMDLNGGGWTVIQHREDGSLDFQRGWKEYKMGFGNPSGEYWLGNEFIFAITSQRQYTLRTELMDWEGNRAYSQYDRFHIGNEKQNYRLYLKGHSGTAGKQSSLILHGADFSTKDADNDNCMCKCALMLTGGWWFDACGPSNLNGMFYTAGQNHGKLNGIKWHYFKGPSYSLRSTTMMIRPLDF.

The N-terminal stretch at 1–19 (MTVFLSFAFLAAILTHIGC) is a signal peptide. N-linked (GlcNAc...) asparagine glycans are attached at residues asparagine 92, asparagine 122, asparagine 154, asparagine 243, and asparagine 295. Residues 158–254 (RLEIQLLENS…SVLQKQQLEL (97 aa)) are a coiled coil. Residues 277–497 (KEEVKPFRDC…STTMMIRPLD (221 aa)) form the Fibrinogen C-terminal domain. 2 cysteine pairs are disulfide-bonded: cysteine 286–cysteine 315 and cysteine 439–cysteine 452.

In terms of assembly, homooligomer. Interacts with TEK/TIE2. Interacts with SVEP1/polydom. Interacts with THBD; this interaction significantly inhibits the generation of activated PC and TAFIa/CPB2 by the thrombin/thrombomodulin complex.

It localises to the secreted. Binds and activates TIE2 receptor by inducing its tyrosine phosphorylation. Implicated in endothelial developmental processes later and distinct from that of VEGF. Appears to play a crucial role in mediating reciprocal interactions between the endothelium and surrounding matrix and mesenchyme. Mediates blood vessel maturation/stability. It may play an important role in the heart early development. The protein is Angiopoietin-1 (ANGPT1) of Sus scrofa (Pig).